The primary structure comprises 162 residues: UPF0114 protein Sfri_3655 (162 aa).

The next 3 membrane-spanning stretches (helical) occupy residues 15 to 35, 53 to 73, and 136 to 156; these read IMAPIYLGLSLILFALGIKFF, LVLITLSLIDITLVGGLLIMV, and IMWYLLIHITFVLSAFAMGYL.

The protein belongs to the UPF0114 family.

Its subcellular location is the cell membrane. In Shewanella frigidimarina (strain NCIMB 400), this protein is UPF0114 protein Sfri_3655.